A 497-amino-acid polypeptide reads, in one-letter code: 4,4'-diaponeurosporene oxygenase (497 aa).

7-19 (VIGGGLGGISAAI) contributes to the FAD binding site.

It belongs to the carotenoid/retinoid oxidoreductase family. CrtP subfamily. FAD is required as a cofactor.

The enzyme catalyses all-trans-4,4'-diaponeurosporene + 2 AH2 + 2 O2 = 4,4'-diaponeurosporenal + 2 A + 3 H2O. It functions in the pathway carotenoid biosynthesis; staphyloxanthin biosynthesis; staphyloxanthin from farnesyl diphosphate: step 3/5. Involved in the biosynthesis of the yellow-orange carotenoid staphyloxanthin, which plays a role in the virulence via its protective function against oxidative stress. Catalyzes the oxidation of the terminal methyl side group of 4,4'-diaponeurosporene to form 4,4'-diaponeurosporen-4-al. The C40 carotenoid lycopene is a poor substrate. The protein is 4,4'-diaponeurosporene oxygenase of Staphylococcus aureus (strain Mu50 / ATCC 700699).